A 279-amino-acid polypeptide reads, in one-letter code: MDMRTKLMAVVAGAAMAFGGTAAAQGTPAPGKVAATKAPAAATRGKTEVTWWGHAAFVIRSPGGAVIAIDPWLSNPKAPKGAAQPEALDAILLTHGHFDHVGEAKALAEKTGAKVYGSFELINLLGLPEAQSVGANAGGTFQVKDVTFHLVEAVHSSSYAADPKSPAQYAGAPVGYVLEIDKGPTLYHAGDTGPFEGMSLIATQFKPSVALLPIGGHFTMGPAEAAQAVRLLKVKSVIPMHYGTFPLLQGTPDALTGELKKLRNTAKVVVPEPGATTAL.

The protein belongs to the UPF0173 family.

This is UPF0173 metal-dependent hydrolase MXAN_1394 from Myxococcus xanthus (strain DK1622).